Consider the following 716-residue polypeptide: Fatty acid oxidation complex subunit alpha (716 aa).

The tract at residues 1 to 189 (MIYQSPTIQV…KVGAVDAVVA (189 aa)) is enoyl-CoA hydratase/isomerase. Aspartate 296 serves as a coordination point for substrate. The segment at 311–716 (KAVNSAAVLG…AANNGSYYQA (406 aa)) is 3-hydroxyacyl-CoA dehydrogenase. NAD(+)-binding positions include methionine 324, aspartate 343, 400 to 402 (VVE), lysine 407, and serine 429. Histidine 450 acts as the For 3-hydroxyacyl-CoA dehydrogenase activity in catalysis. Position 453 (asparagine 453) interacts with NAD(+). Residues asparagine 500 and tyrosine 660 each coordinate substrate.

In the N-terminal section; belongs to the enoyl-CoA hydratase/isomerase family. This sequence in the C-terminal section; belongs to the 3-hydroxyacyl-CoA dehydrogenase family. In terms of assembly, heterotetramer of two alpha chains (FadB) and two beta chains (FadA).

The enzyme catalyses a (3S)-3-hydroxyacyl-CoA + NAD(+) = a 3-oxoacyl-CoA + NADH + H(+). The catalysed reaction is a (3S)-3-hydroxyacyl-CoA = a (2E)-enoyl-CoA + H2O. It catalyses the reaction a 4-saturated-(3S)-3-hydroxyacyl-CoA = a (3E)-enoyl-CoA + H2O. It carries out the reaction (3S)-3-hydroxybutanoyl-CoA = (3R)-3-hydroxybutanoyl-CoA. The enzyme catalyses a (3Z)-enoyl-CoA = a 4-saturated (2E)-enoyl-CoA. The catalysed reaction is a (3E)-enoyl-CoA = a 4-saturated (2E)-enoyl-CoA. Its pathway is lipid metabolism; fatty acid beta-oxidation. Functionally, involved in the aerobic and anaerobic degradation of long-chain fatty acids via beta-oxidation cycle. Catalyzes the formation of 3-oxoacyl-CoA from enoyl-CoA via L-3-hydroxyacyl-CoA. It can also use D-3-hydroxyacyl-CoA and cis-3-enoyl-CoA as substrate. The sequence is that of Fatty acid oxidation complex subunit alpha from Shewanella oneidensis (strain ATCC 700550 / JCM 31522 / CIP 106686 / LMG 19005 / NCIMB 14063 / MR-1).